We begin with the raw amino-acid sequence, 209 residues long: Translation initiation factor IF-3 (209 aa).

Belongs to the IF-3 family. As to quaternary structure, monomer.

The protein resides in the cytoplasm. Functionally, IF-3 binds to the 30S ribosomal subunit and shifts the equilibrium between 70S ribosomes and their 50S and 30S subunits in favor of the free subunits, thus enhancing the availability of 30S subunits on which protein synthesis initiation begins. The protein is Translation initiation factor IF-3 of Chlorobium phaeovibrioides (strain DSM 265 / 1930) (Prosthecochloris vibrioformis (strain DSM 265)).